We begin with the raw amino-acid sequence, 181 residues long: Oleosin (181 aa).

The interval 1 to 28 (TTTTYDRHFTTTQPHYRQDDRSRYDQQT) is disordered. A polar region spans residues 1-38 (TTTTYDRHFTTTQPHYRQDDRSRYDQQTHSQSTSRTLA). A compositionally biased stretch (basic and acidic residues) spans 16–26 (YRQDDRSRYDQ). 3 helical membrane-spanning segments follow: residues 38–58 (AIIA…LTFI), 69–89 (PLFV…GLAV), and 90–110 (TGFL…SYLF). The segment at 39–110 (IIALLPVGGI…TGLSSLSYLF (72 aa)) is hydrophobic. Residues 155-181 (EMGDQGQVGVHAQVGGGKEGRKSGDRT) form a disordered region. Over residues 158–167 (DQGQVGVHAQ) the composition is skewed to low complexity. Over residues 172–181 (KEGRKSGDRT) the composition is skewed to basic and acidic residues.

Belongs to the oleosin family.

The protein localises to the lipid droplet. It localises to the membrane. Functionally, may have a structural role to stabilize the lipid body during desiccation of the seed by preventing coalescence of the oil. Probably interacts with both lipid and phospholipid moieties of lipid bodies. May also provide recognition signals for specific lipase anchorage in lipolysis during seedling growth. This Helianthus annuus (Common sunflower) protein is Oleosin.